Consider the following 227-residue polypeptide: UPF0758 protein Psyc_1834 (227 aa).

Residues 102–224 form the MPN domain; it reads GLGRSQMVKD…TLSYAENCLA (123 aa). Zn(2+) is bound by residues histidine 173, histidine 175, and aspartate 186. The JAMM motif signature appears at 173 to 186; it reads HNHPHTDATPSTAD.

The protein belongs to the UPF0758 family.

The polypeptide is UPF0758 protein Psyc_1834 (Psychrobacter arcticus (strain DSM 17307 / VKM B-2377 / 273-4)).